Consider the following 395-residue polypeptide: MPGFELFGPEEKQEVADVMEHGFTFRYNFDHMRNDRWKTRDMEQLLCEKMNVKHAHLLSSGTAALQTAMMAAGIGAGDEVIVPPFTFVASVEAIFMAGAVPIFAEIDETLCLSPEGIEAVITPRTKAINLVHMCGSMAKMDEIKAICKKHNLVLLEDACQAIGGSYKGQALGTIGDVGCYSFDSVKTITCGEGGAVITNNTEIYDNAHMFSDHGHDHIGKDRGAESHPIMGLNFRISEMNAALGLAQLRKLDTIIDIQRKNKKAIKDAMASIPEVSFREIPDPEGDSAGFLSFMLPTEARTQEISKKLAANGVDGCFYWYVNNWHYLKNWKHIQELKAPAALPITLIADRPDYTQISVPKSDAIMSRTISMLIKLSWTDAQIAERIENIKKAFAQ.

Lysine 186 carries the N6-(pyridoxal phosphate)lysine modification.

This sequence belongs to the DegT/DnrJ/EryC1 family. It depends on pyridoxal 5'-phosphate as a cofactor.

It carries out the reaction 8-amino-3,8-dideoxy-alpha-D-manno-octulosonate + 2-oxoglutarate = 3,8-dideoxy-8-oxo-alpha-D-manno-octulosonate + L-glutamate. Its pathway is bacterial outer membrane biogenesis; lipopolysaccharide biosynthesis. In terms of biological role, catalyzes the second (last) step of the biosynthesis of Kdo8N (8-amino-3,8-dideoxy-D-manno-octulosonate) from Kdo (3-deoxy-D-manno-octulosonate). In Shewanella oneidensis (strain ATCC 700550 / JCM 31522 / CIP 106686 / LMG 19005 / NCIMB 14063 / MR-1), this protein is 8-amino-3,8-dideoxy-alpha-D-manno-octulosonate transaminase.